The primary structure comprises 195 residues: Endoribonuclease YbeY (195 aa).

The Zn(2+) site is built by H153, H157, and H163.

The protein belongs to the endoribonuclease YbeY family. Requires Zn(2+) as cofactor.

It localises to the cytoplasm. In terms of biological role, single strand-specific metallo-endoribonuclease involved in late-stage 70S ribosome quality control and in maturation of the 3' terminus of the 16S rRNA. The chain is Endoribonuclease YbeY from Prochlorococcus marinus (strain SARG / CCMP1375 / SS120).